Reading from the N-terminus, the 124-residue chain is U13-hexatoxin-Mg1a (124 aa).

An N-terminal signal peptide occupies residues 1–17 (MKLSALVFVASVMLVAA). Positions 18–52 (SPVKDVEEPVETHLAADLKTIEELAKYEEAAVQKR) are excised as a propeptide. 4 cysteine pairs are disulfide-bonded: Cys54/Cys72, Cys65/Cys78, Cys69/Cys116, and Cys71/Cys87.

As to expression, expressed by the venom gland.

It is found in the secreted. Its function is as follows. No toxicity is observed upon intracranial injection into mice and intrathorax injection into crickets. The polypeptide is U13-hexatoxin-Mg1a (Macrothele gigas (Japanese funnel web spider)).